A 341-amino-acid polypeptide reads, in one-letter code: L-threonine 3-dehydrogenase (341 aa).

Cysteine 38 provides a ligand contact to Zn(2+). Active-site charge relay system residues include threonine 40 and histidine 43. Residues histidine 63, glutamate 64, cysteine 93, cysteine 96, cysteine 99, and cysteine 107 each contribute to the Zn(2+) site. NAD(+) is bound by residues isoleucine 175, aspartate 195, arginine 200, 262–264 (LGI), and 286–287 (IY).

It belongs to the zinc-containing alcohol dehydrogenase family. As to quaternary structure, homotetramer. The cofactor is Zn(2+).

It is found in the cytoplasm. The catalysed reaction is L-threonine + NAD(+) = (2S)-2-amino-3-oxobutanoate + NADH + H(+). The protein operates within amino-acid degradation; L-threonine degradation via oxydo-reductase pathway; glycine from L-threonine: step 1/2. Catalyzes the NAD(+)-dependent oxidation of L-threonine to 2-amino-3-ketobutyrate. This Yersinia pseudotuberculosis serotype O:1b (strain IP 31758) protein is L-threonine 3-dehydrogenase.